The primary structure comprises 353 residues: Peptide-N(4)-(N-acetyl-beta-glucosaminyl)asparagine amidase (353 aa).

Cys125, Cys128, and Cys159 together coordinate Zn(2+). The Nucleophile role is filled by Cys185. Residues His212 and Asp229 contribute to the active site. Residue Glu232 participates in substrate binding. Residues 316 to 353 (SLEKTKPSKDTSTTTLTGTKGRESGSTAWKQQRGEDGS) are disordered. Low complexity predominate over residues 325–334 (DTSTTTLTGT).

Belongs to the transglutaminase-like superfamily. PNGase family. Zn(2+) serves as cofactor.

The protein localises to the cytoplasm. The enzyme catalyses Hydrolysis of an N(4)-(acetyl-beta-D-glucosaminyl)asparagine residue in which the glucosamine residue may be further glycosylated, to yield a (substituted) N-acetyl-beta-D-glucosaminylamine and a peptide containing an aspartate residue.. In terms of biological role, specifically deglycosylates the denatured form of N-linked glycoproteins in the cytoplasm and assists their proteasome-mediated degradation. Cleaves the beta-aspartyl-glucosamine (GlcNAc) of the glycan and the amide side chain of Asn, converting Asn to Asp. Prefers proteins containing high-mannose over those bearing complex type oligosaccharides. Can recognize misfolded proteins in the endoplasmic reticulum that are exported to the cytosol to be destroyed and deglycosylate them, while it has no activity toward native proteins. Deglycosylation is a prerequisite for subsequent proteasome-mediated degradation of some, but not all, misfolded glycoproteins. This is Peptide-N(4)-(N-acetyl-beta-glucosaminyl)asparagine amidase (PNG1) from Kluyveromyces lactis (strain ATCC 8585 / CBS 2359 / DSM 70799 / NBRC 1267 / NRRL Y-1140 / WM37) (Yeast).